A 129-amino-acid polypeptide reads, in one-letter code: Histone H2A.J (129 aa).

The tract at residues 1–22 is disordered; sequence MSGRGKQGGKVRAKAKSRSSRA. Lys6 and Lys10 each carry N6-acetyllysine. A compositionally biased stretch (basic residues) spans 7–19; sequence QGGKVRAKAKSRS. Lys10 bears the N6-lactoyllysine; alternate mark. Gln105 is subject to N5-methylglutamine. Position 121 is a phosphothreonine; by DCAF1 (Thr121).

The protein belongs to the histone H2A family. The nucleosome is a histone octamer containing two molecules each of H2A, H2B, H3 and H4 assembled in one H3-H4 heterotetramer and two H2A-H2B heterodimers. The octamer wraps approximately 147 bp of DNA. Post-translationally, glutamine methylation at Gln-105 (H2AQ104me) by FBL is specifically dedicated to polymerase I. It is present at 35S ribosomal DNA locus and impairs binding of the FACT complex. Monoubiquitination of Lys-120 (H2AXK119ub) gives a specific tag for epigenetic transcriptional repression. Following DNA double-strand breaks (DSBs), it is ubiquitinated through 'Lys-63' linkage of ubiquitin moieties. In terms of processing, phosphorylation on Ser-2 (H2AS1ph) is enhanced during mitosis. Phosphorylation on Ser-2 by RPS6KA5/MSK1 directly represses transcription. Acetylation of H3 inhibits Ser-2 phosphorylation by RPS6KA5/MSK1. Phosphorylation at Thr-121 (H2AT120ph) by DCAF1 is present in the regulatory region of many tumor suppresor genes and down-regulates their transcription.

The protein resides in the nucleus. The protein localises to the chromosome. Its function is as follows. Core component of nucleosome. Nucleosomes wrap and compact DNA into chromatin, limiting DNA accessibility to the cellular machineries which require DNA as a template. Histones thereby play a central role in transcription regulation, DNA repair, DNA replication and chromosomal stability. DNA accessibility is regulated via a complex set of post-translational modifications of histones, also called histone code, and nucleosome remodeling. The protein is Histone H2A.J of Bos taurus (Bovine).